The sequence spans 647 residues: ATP-dependent zinc metalloprotease FtsH (647 aa).

Residues 1–33 (MARKSDEDTNPMDKFMDRLRGSPGDGGPGRPDP) are disordered. The Cytoplasmic portion of the chain corresponds to 1 to 39 (MARKSDEDTNPMDKFMDRLRGSPGDGGPGRPDPSQRKVH). Residues 40-60 (FSIWYFILALLLIVWMQTYMG) traverse the membrane as a helical segment. Residues 61 to 134 (EQQSEKISYS…RFSGDVQNPW (74 aa)) lie on the Periplasmic side of the membrane. Residues 135-155 (LGLITWWLLPFAIMIFFWSFL) form a helical membrane-spanning segment. The Cytoplasmic segment spans residues 156-647 (MRRMGGGPQG…DPVQVEGGAA (492 aa)). 227–234 (GAPGTGKT) contributes to the ATP binding site. H449 lines the Zn(2+) pocket. The active site involves E450. Zn(2+) is bound by residues H453 and D526.

This sequence in the central section; belongs to the AAA ATPase family. The protein in the C-terminal section; belongs to the peptidase M41 family. Homohexamer. Zn(2+) serves as cofactor.

It is found in the cell inner membrane. In terms of biological role, acts as a processive, ATP-dependent zinc metallopeptidase for both cytoplasmic and membrane proteins. Plays a role in the quality control of integral membrane proteins. In Syntrophobacter fumaroxidans (strain DSM 10017 / MPOB), this protein is ATP-dependent zinc metalloprotease FtsH.